Here is a 660-residue protein sequence, read N- to C-terminus: Bifunctional polymyxin resistance protein ArnA (660 aa).

The segment at 1–304 (MKAVVFAYHD…TLGLVEGSRL (304 aa)) is formyltransferase ArnAFT. Catalysis depends on His104, which acts as the Proton donor; for formyltransferase activity. Residues Arg114 and 136–140 (VAKAD) each bind (6R)-10-formyltetrahydrofolate. Residues 314–660 (RRTRVLILGV…RTVDIVEKSS (347 aa)) are dehydrogenase ArnADH. NAD(+)-binding positions include Asp347 and 368–369 (DI). Residues Ala393, Tyr398, and 432–433 (TS) each bind UDP-alpha-D-glucuronate. Glu434 serves as the catalytic Proton acceptor; for decarboxylase activity. UDP-alpha-D-glucuronate is bound by residues Arg460, Asn492, 526–535 (KLIDGGKQKR), and Tyr613. Catalysis depends on Arg619, which acts as the Proton donor; for decarboxylase activity.

It in the N-terminal section; belongs to the Fmt family. UDP-L-Ara4N formyltransferase subfamily. This sequence in the C-terminal section; belongs to the NAD(P)-dependent epimerase/dehydratase family. UDP-glucuronic acid decarboxylase subfamily. As to quaternary structure, homohexamer, formed by a dimer of trimers.

It carries out the reaction UDP-alpha-D-glucuronate + NAD(+) = UDP-beta-L-threo-pentopyranos-4-ulose + CO2 + NADH. It catalyses the reaction UDP-4-amino-4-deoxy-beta-L-arabinose + (6R)-10-formyltetrahydrofolate = UDP-4-deoxy-4-formamido-beta-L-arabinose + (6S)-5,6,7,8-tetrahydrofolate + H(+). The protein operates within nucleotide-sugar biosynthesis; UDP-4-deoxy-4-formamido-beta-L-arabinose biosynthesis; UDP-4-deoxy-4-formamido-beta-L-arabinose from UDP-alpha-D-glucuronate: step 1/3. It functions in the pathway nucleotide-sugar biosynthesis; UDP-4-deoxy-4-formamido-beta-L-arabinose biosynthesis; UDP-4-deoxy-4-formamido-beta-L-arabinose from UDP-alpha-D-glucuronate: step 3/3. Its pathway is bacterial outer membrane biogenesis; lipopolysaccharide biosynthesis. Its function is as follows. Bifunctional enzyme that catalyzes the oxidative decarboxylation of UDP-glucuronic acid (UDP-GlcUA) to UDP-4-keto-arabinose (UDP-Ara4O) and the addition of a formyl group to UDP-4-amino-4-deoxy-L-arabinose (UDP-L-Ara4N) to form UDP-L-4-formamido-arabinose (UDP-L-Ara4FN). The modified arabinose is attached to lipid A and is required for resistance to polymyxin and cationic antimicrobial peptides. The protein is Bifunctional polymyxin resistance protein ArnA of Escherichia fergusonii (strain ATCC 35469 / DSM 13698 / CCUG 18766 / IAM 14443 / JCM 21226 / LMG 7866 / NBRC 102419 / NCTC 12128 / CDC 0568-73).